Consider the following 376-residue polypeptide: Alanine racemase 1 (376 aa).

The active-site Proton acceptor; specific for D-alanine is the Lys-40. At Lys-40 the chain carries N6-(pyridoxal phosphate)lysine. Arg-138 serves as a coordination point for substrate. The active-site Proton acceptor; specific for L-alanine is the Tyr-268. Met-316 serves as a coordination point for substrate.

The protein belongs to the alanine racemase family. It depends on pyridoxal 5'-phosphate as a cofactor.

It catalyses the reaction L-alanine = D-alanine. It functions in the pathway amino-acid biosynthesis; D-alanine biosynthesis; D-alanine from L-alanine: step 1/1. In terms of biological role, catalyzes the interconversion of L-alanine and D-alanine. May also act on other amino acids. The protein is Alanine racemase 1 (alr1) of Oceanobacillus iheyensis (strain DSM 14371 / CIP 107618 / JCM 11309 / KCTC 3954 / HTE831).